A 546-amino-acid chain; its full sequence is 2-isopropylmalate synthase (546 aa).

A Pyruvate carboxyltransferase domain is found at 5 to 274; that stretch reads ITIFDTTLRD…TADVHTEHLT (270 aa). D14, H209, H211, and N245 together coordinate Mn(2+). The tract at residues 415-546 is regulatory domain; the sequence is RLDQFSVHLS…QNGIMHTYGE (132 aa).

It belongs to the alpha-IPM synthase/homocitrate synthase family. LeuA type 1 subfamily. Homodimer. Requires Mn(2+) as cofactor.

It localises to the cytoplasm. The catalysed reaction is 3-methyl-2-oxobutanoate + acetyl-CoA + H2O = (2S)-2-isopropylmalate + CoA + H(+). The protein operates within amino-acid biosynthesis; L-leucine biosynthesis; L-leucine from 3-methyl-2-oxobutanoate: step 1/4. In terms of biological role, catalyzes the condensation of the acetyl group of acetyl-CoA with 3-methyl-2-oxobutanoate (2-ketoisovalerate) to form 3-carboxy-3-hydroxy-4-methylpentanoate (2-isopropylmalate). In Salinibacter ruber (strain M8), this protein is 2-isopropylmalate synthase.